The sequence spans 142 residues: General odorant-binding protein 99a (142 aa).

Residues 1–16 (MKVFVAICVLIGLASA) form the signal peptide. 3 cysteine pairs are disulfide-bonded: Cys-33-Cys-64, Cys-60-Cys-116, and Cys-105-Cys-125.

Belongs to the PBP/GOBP family. In terms of tissue distribution, expressed in larval chemosensory organ. Specifically expressed exclusively in a subset of chemosensory sensilla on the third antennal segment.

Its subcellular location is the secreted. In terms of biological role, present in the aqueous fluid surrounding olfactory sensory dendrites and are thought to aid in the capture and transport of hydrophobic odorants into and through this fluid. In Drosophila melanogaster (Fruit fly), this protein is General odorant-binding protein 99a (Obp99a).